The primary structure comprises 150 residues: Lipoprotein signal peptidase (150 aa).

Helical transmembrane passes span 8 to 28, 58 to 78, and 81 to 101; these read FYALVGFLVFLDQVTKYLAHA, GFSWLFFLLGIIALIFIGWFL, and TTGSIVFLALLQGGIAGNVFD. Catalysis depends on residues Asp116 and Asp132. Residues 126–146 traverse the membrane as a helical segment; it reads VVFNIADLFILAGVFGTFLFL.

Belongs to the peptidase A8 family.

Its subcellular location is the cell membrane. The enzyme catalyses Release of signal peptides from bacterial membrane prolipoproteins. Hydrolyzes -Xaa-Yaa-Zaa-|-(S,diacylglyceryl)Cys-, in which Xaa is hydrophobic (preferably Leu), and Yaa (Ala or Ser) and Zaa (Gly or Ala) have small, neutral side chains.. Its pathway is protein modification; lipoprotein biosynthesis (signal peptide cleavage). This protein specifically catalyzes the removal of signal peptides from prolipoproteins. The sequence is that of Lipoprotein signal peptidase from Tropheryma whipplei (strain TW08/27) (Whipple's bacillus).